Reading from the N-terminus, the 65-residue chain is Hainantoxin-X.3 (65 aa).

The first 20 residues, 1–20 (MNMKILVLVAVLCLVVSTHA), serve as a signal peptide directing secretion. Positions 21-37 (ERHSKTDMGDSPMIQER) are excised as a propeptide. 3 disulfides stabilise this stretch: Cys39–Cys56, Cys46–Cys59, and Cys55–Cys64.

It belongs to the neurotoxin 36 family. 02 subfamily. Expressed by the venom gland.

Its subcellular location is the secreted. In terms of biological role, reversibly blocks N-type calcium channels (Cav2.2/CACNA1B) in rat dorsal root ganglion cells. Elicits no toxic symptoms in either vertebrates or invertebrates during a period of 48 hours post-injection, when it was assayed in vivo by direct injection into mice and cockroaches. This chain is Hainantoxin-X.3, found in Cyriopagopus hainanus (Chinese bird spider).